The chain runs to 691 residues: DNA ligase (691 aa).

Residues 41–45 (DAEYD), 90–91 (SL), and Glu-130 contribute to the NAD(+) site. Lys-132 (N6-AMP-lysine intermediate) is an active-site residue. NAD(+)-binding residues include Arg-153, Glu-190, Lys-307, and Lys-331. Residues Cys-425, Cys-428, Cys-443, and Cys-449 each coordinate Zn(2+). The BRCT domain maps to 610–691 (APQGVLAGKT…MHTLLEGHAR (82 aa)).

It belongs to the NAD-dependent DNA ligase family. LigA subfamily. Requires Mg(2+) as cofactor. Mn(2+) is required as a cofactor.

The catalysed reaction is NAD(+) + (deoxyribonucleotide)n-3'-hydroxyl + 5'-phospho-(deoxyribonucleotide)m = (deoxyribonucleotide)n+m + AMP + beta-nicotinamide D-nucleotide.. In terms of biological role, DNA ligase that catalyzes the formation of phosphodiester linkages between 5'-phosphoryl and 3'-hydroxyl groups in double-stranded DNA using NAD as a coenzyme and as the energy source for the reaction. It is essential for DNA replication and repair of damaged DNA. The protein is DNA ligase of Burkholderia pseudomallei (strain 1710b).